We begin with the raw amino-acid sequence, 858 residues long: Autoinducer 2 sensor kinase/phosphatase LuxQ (858 aa).

2 helical membrane-spanning segments follow: residues 14 to 34 (STLITKIIILVLAPIILGIFV) and 362 to 382 (LFNFALSPIMVWSEAGVLIQI). Residues 488–710 (KMSHEIRTPI…TFVVTLPVKD (223 aa)) enclose the Histidine kinase domain. H491 carries the post-translational modification Phosphohistidine; by autocatalysis. The Response regulatory domain occupies 735–850 (KVLLVEDNHT…ALHEAFVDFK (116 aa)). D784 bears the 4-aspartylphosphate mark.

In terms of assembly, binds the complex formed by the autoinducer and LuxP.

It is found in the cell inner membrane. It carries out the reaction ATP + protein L-histidine = ADP + protein N-phospho-L-histidine.. Functionally, at low cell density, in absence of autoinducer has a kinase activity, and autophosphorylates on a histidine residue. The phosphoryl group is then transferred to an aspartate residue in the response regulator domain. The phosphoryl group is transferred to LuxU, and ultimately to LuxO. At high cell density, in the presence of autoinducer, the kinase activity is inactivated, and the response regulator domain has a phosphatase activity. This chain is Autoinducer 2 sensor kinase/phosphatase LuxQ (luxQ), found in Vibrio parahaemolyticus serotype O3:K6 (strain RIMD 2210633).